The following is a 190-amino-acid chain: Translation initiation factor IF-3 (190 aa).

This sequence belongs to the IF-3 family. Monomer.

The protein resides in the cytoplasm. Functionally, IF-3 binds to the 30S ribosomal subunit and shifts the equilibrium between 70S ribosomes and their 50S and 30S subunits in favor of the free subunits, thus enhancing the availability of 30S subunits on which protein synthesis initiation begins. This Prochlorococcus marinus (strain MIT 9301) protein is Translation initiation factor IF-3.